The sequence spans 301 residues: 4-hydroxy-tetrahydrodipicolinate synthase (301 aa).

Residue Thr57 participates in pyruvate binding. Tyr143 functions as the Proton donor/acceptor in the catalytic mechanism. Lys171 serves as the catalytic Schiff-base intermediate with substrate. Position 211 (Ile211) interacts with pyruvate.

It belongs to the DapA family. Homotetramer; dimer of dimers.

It localises to the cytoplasm. It carries out the reaction L-aspartate 4-semialdehyde + pyruvate = (2S,4S)-4-hydroxy-2,3,4,5-tetrahydrodipicolinate + H2O + H(+). Its pathway is amino-acid biosynthesis; L-lysine biosynthesis via DAP pathway; (S)-tetrahydrodipicolinate from L-aspartate: step 3/4. Its function is as follows. Catalyzes the condensation of (S)-aspartate-beta-semialdehyde [(S)-ASA] and pyruvate to 4-hydroxy-tetrahydrodipicolinate (HTPA). This Bifidobacterium longum (strain DJO10A) protein is 4-hydroxy-tetrahydrodipicolinate synthase.